A 429-amino-acid chain; its full sequence is Glutamate-1-semialdehyde 2,1-aminomutase 2 (429 aa).

Lysine 268 carries the N6-(pyridoxal phosphate)lysine modification.

Belongs to the class-III pyridoxal-phosphate-dependent aminotransferase family. HemL subfamily. As to quaternary structure, homodimer. The cofactor is pyridoxal 5'-phosphate.

Its subcellular location is the cytoplasm. It catalyses the reaction (S)-4-amino-5-oxopentanoate = 5-aminolevulinate. It functions in the pathway porphyrin-containing compound metabolism; protoporphyrin-IX biosynthesis; 5-aminolevulinate from L-glutamyl-tRNA(Glu): step 2/2. The protein is Glutamate-1-semialdehyde 2,1-aminomutase 2 of Staphylococcus aureus (strain MRSA252).